Here is a 938-residue protein sequence, read N- to C-terminus: Protocadherin gamma-C4 (938 aa).

A signal peptide spans 1–29 (MLRKVRSWTEIWRWATLLFLFYHLGYVCG). Cadherin domains are found at residues 30–133 (QIRY…APRF), 134–242 (PRQQ…APAF), 243–350 (QQSS…APYI), 351–455 (TVTS…PPSF), 456–565 (FQRS…APAV), and 572–676 (PGSL…VPDL). Residues 30 to 692 (QIRYPVPEES…REGESRLTLY (663 aa)) lie on the Extracellular side of the membrane. 3 N-linked (GlcNAc...) asparagine glycosylation sites follow: asparagine 265, asparagine 276, and asparagine 444. A helical transmembrane segment spans residues 693–713 (LAVSLVAICFVSFGSFVALLS). At 714–938 (KCLRGAACGV…KKKSGKKEKK (225 aa)) the chain is on the cytoplasmic side. 2 disordered regions span residues 791 to 847 (PSAP…WPNN) and 908 to 938 (ATLT…KEKK). Residues 822 to 847 (WRFSQAQRPGTSGSQNGDDTGTWPNN) are compositionally biased toward polar residues. Residues 928-938 (NKKKSGKKEKK) are compositionally biased toward basic residues.

It is found in the cell membrane. In terms of biological role, potential calcium-dependent cell-adhesion protein. May be involved in the establishment and maintenance of specific neuronal connections in the brain. The chain is Protocadherin gamma-C4 (PCDHGC4) from Homo sapiens (Human).